Reading from the N-terminus, the 149-residue chain is Cell division protein SepF (149 aa).

The protein belongs to the SepF family. Homodimer. Interacts with FtsZ.

The protein resides in the cytoplasm. Functionally, cell division protein that is part of the divisome complex and is recruited early to the Z-ring. Probably stimulates Z-ring formation, perhaps through the cross-linking of FtsZ protofilaments. Its function overlaps with FtsA. The sequence is that of Cell division protein SepF from Clostridium perfringens (strain ATCC 13124 / DSM 756 / JCM 1290 / NCIMB 6125 / NCTC 8237 / Type A).